A 200-amino-acid polypeptide reads, in one-letter code: Proteasome subunit beta 2 (200 aa).

Residue methionine 1 is a propeptide, removed in mature form; by autocatalysis. Threonine 2 (nucleophile) is an active-site residue.

Belongs to the peptidase T1B family. The 20S proteasome core is composed of 14 alpha and 14 beta subunits that assemble into four stacked heptameric rings, resulting in a barrel-shaped structure. The two inner rings, each composed of seven catalytic beta subunits, are sandwiched by two outer rings, each composed of seven alpha subunits. The catalytic chamber with the active sites is on the inside of the barrel. Has a gated structure, the ends of the cylinder being occluded by the N-termini of the alpha-subunits. Is capped at one or both ends by the proteasome regulatory ATPase, PAN.

It localises to the cytoplasm. The enzyme catalyses Cleavage of peptide bonds with very broad specificity.. The formation of the proteasomal ATPase PAN-20S proteasome complex, via the docking of the C-termini of PAN into the intersubunit pockets in the alpha-rings, triggers opening of the gate for substrate entry. Interconversion between the open-gate and close-gate conformations leads to a dynamic regulation of the 20S proteasome proteolysis activity. In terms of biological role, component of the proteasome core, a large protease complex with broad specificity involved in protein degradation. The sequence is that of Proteasome subunit beta 2 from Pyrobaculum islandicum (strain DSM 4184 / JCM 9189 / GEO3).